We begin with the raw amino-acid sequence, 847 residues long: DNA mismatch repair protein MutS (847 aa).

Position 602–609 (602–609 (GPNMSGKS)) interacts with ATP.

The protein belongs to the DNA mismatch repair MutS family.

Its function is as follows. This protein is involved in the repair of mismatches in DNA. It is possible that it carries out the mismatch recognition step. This protein has a weak ATPase activity. This is DNA mismatch repair protein MutS from Streptococcus uberis (strain ATCC BAA-854 / 0140J).